Consider the following 350-residue polypeptide: Formimidoylglutamase (350 aa).

The Mn(2+) site is built by His-130, Asp-165, His-167, Asp-169, Asp-269, and Asp-271.

The protein belongs to the arginase family. Mn(2+) serves as cofactor.

It carries out the reaction N-formimidoyl-L-glutamate + H2O = formamide + L-glutamate. Its pathway is amino-acid degradation; L-histidine degradation into L-glutamate; L-glutamate from N-formimidoyl-L-glutamate (hydrolase route): step 1/1. In terms of biological role, catalyzes the conversion of N-formimidoyl-L-glutamate to L-glutamate and formamide. This Aliivibrio fischeri (strain ATCC 700601 / ES114) (Vibrio fischeri) protein is Formimidoylglutamase.